The primary structure comprises 592 residues: BRCA1-associated protein (592 aa).

Ser52 carries the post-translational modification Phosphoserine. Residues 78-124 are disordered; the sequence is KSNPDELKTTVEERKSSEASPTAQRSKDHSKECINAAPDSPSKQLPD. Positions 80-94 are enriched in basic and acidic residues; that stretch reads NPDELKTTVEERKSS. Residues Ser97, Ser117, and Ser119 each carry the phosphoserine modification. The segment at 264–304 adopts an RING-type zinc-finger fold; that stretch reads CTVCLERMDESVNGILTTLCNHSFHSQCLQRWDDTTCPVCR. A UBP-type; degenerate zinc finger spans residues 301–393; it reads PVCRYCQTPE…GKIVQYECEG (93 aa). Positions 317, 320, 329, 332, 337, 344, 348, and 354 each coordinate Zn(2+). The stretch at 429–537 forms a coiled coil; it reads RIEKDTAEEI…EIQEQLRDVM (109 aa). The disordered stretch occupies residues 565 to 592; sequence AMASASSPASSGGSGKLPSRKGRSKRGK. Over residues 582–592 the composition is skewed to basic residues; the sequence is PSRKGRSKRGK.

Interacts with the nuclear localization signal of BRCA1 and with the N-terminal of KSR1. The C-terminal portion of BCRA1 interacts with DDB1. In terms of tissue distribution, expressed in breast epithelial cell lines.

Its subcellular location is the cytoplasm. It catalyses the reaction S-ubiquitinyl-[E2 ubiquitin-conjugating enzyme]-L-cysteine + [acceptor protein]-L-lysine = [E2 ubiquitin-conjugating enzyme]-L-cysteine + N(6)-ubiquitinyl-[acceptor protein]-L-lysine.. It functions in the pathway protein modification; protein ubiquitination. In terms of biological role, negatively regulates MAP kinase activation by limiting the formation of Raf/MEK complexes probably by inactivation of the KSR1 scaffold protein. Also acts as a Ras responsive E3 ubiquitin ligase that, on activation of Ras, is modified by auto-polyubiquitination resulting in the release of inhibition of Raf/MEK complex formation. May also act as a cytoplasmic retention protein with a role in regulating nuclear transport. The protein is BRCA1-associated protein of Homo sapiens (Human).